The chain runs to 434 residues: Citrate-proton symporter (434 aa).

Over 1 to 21 (MAQHTPATSRAGTFGAILRVT) the chain is Cytoplasmic. The chain crosses the membrane as a helical span at residues 22–42 (SGNFLEQFDFFLFGFYATYIA). The Periplasmic portion of the chain corresponds to 43 to 54 (RTFFPAESEFAS). Residues 55 to 75 (LMLTFAVFGSGFLMRPVGAIV) traverse the membrane as a helical segment. Topologically, residues 76-87 (LGAYIDRIGRRK) are cytoplasmic. Residues 88–108 (GLMVTLAIMGCGTLLIALVPG) traverse the membrane as a helical segment. The Periplasmic segment spans residues 109–111 (YQT). A helical transmembrane segment spans residues 112-132 (IGLAAPALVLLGRLLQGFSAG). Residues 133 to 164 (VELGGVSVYLSEIATPGNKGFYTSWQSASQQV) lie on the Cytoplasmic side of the membrane. A helical transmembrane segment spans residues 165–185 (AIVVAALIGYSLNITLGHDAI). A topological domain (periplasmic) is located at residue Ser-186. A helical membrane pass occupies residues 187–207 (EWGWRIPFFIGCMIIPLIFVL). The Cytoplasmic segment spans residues 208 to 238 (RRSLQETEAFLQRKHRPDTREIFATIAKNWR). The chain crosses the membrane as a helical span at residues 239–259 (IITAGTLLVAMTTTTFYFITV). Residues 260-276 (YTPTYGRTVLNLSARDS) are Periplasmic-facing. Residues 277–297 (LIVTMLVGVSNFIWLPIGGAI) traverse the membrane as a helical segment. The Cytoplasmic segment spans residues 298–304 (SDRIGRR). Residues 305–325 (AVLMGITLLALITTWPVMQWL) form a helical membrane-spanning segment. Residues 326-335 (TAAPDFTRMT) lie on the Periplasmic side of the membrane. The helical transmembrane segment at 336 to 356 (LVLLWFSFFFGMYNGAMVAAL) threads the bilayer. Over 357–366 (TEVMPVYVRT) the chain is Cytoplasmic. A helical transmembrane segment spans residues 367-387 (VGFSLAFSLATAIFGGLTPAI). The Periplasmic portion of the chain corresponds to 388–400 (STALVKLTGDKSS). The helical transmembrane segment at 401–421 (PGWWLMCAALCGLAATAMLFV) threads the bilayer. Over 422–434 (RLSRGYIAAENKA) the chain is Cytoplasmic.

It belongs to the major facilitator superfamily. Metabolite:H+ Symporter (MHS) family (TC 2.A.1.6) family.

It localises to the cell inner membrane. Uptake of citrate across the boundary membrane with the concomitant transport of protons into the cell (symport system). The protein is Citrate-proton symporter (citA) of Salmonella typhi.